A 234-amino-acid chain; its full sequence is Thrombin-like enzyme contortrixobin (234 aa).

In terms of domain architecture, Peptidase S1 spans 1–225 (VVGGDECNIN…YNDWIQSIIA (225 aa)). 6 cysteine pairs are disulfide-bonded: cysteine 7-cysteine 139, cysteine 26-cysteine 42, cysteine 74-cysteine 232, cysteine 118-cysteine 186, cysteine 150-cysteine 165, and cysteine 176-cysteine 201. Active-site charge relay system residues include histidine 41 and aspartate 86. Catalysis depends on serine 180, which acts as the Charge relay system.

In terms of assembly, monomer. Not glycosylated. In terms of tissue distribution, expressed by the venom gland.

Its subcellular location is the secreted. With respect to regulation, strongly inhibited by diisopropylfluorophosphate (DFP) and to a lesser extent by PMSF, benzamidine and 4,6-diamidino-2-phenylindole. Low inhibition by hirudin. Thrombin-like snake venom serine protease that cleaves beta chain of fibrinogen (FGB), releasing fibrinopeptide B. Has a coagulant activity activating blood coagulation factors V (F5) and XIII (F13A1). The polypeptide is Thrombin-like enzyme contortrixobin (Agkistrodon contortrix contortrix (Southern copperhead)).